The sequence spans 330 residues: MQSWVNKLWYQSHPLRFALWPLTLLFGAVSWLRRLLFSLGLKKATKLPVPVIIVGNITVGGSGKTPTVIYLIELLRSHGFKPGVISRGYGVEIEGVRSVLPEDKPASVGDEPAMIVSRTAVPMVVGAKRVDAAKHLLAEFDVDIIISDDGLQHYQLARDIELIILDGERRLGNGMLLPAGPLREAAWRLKSVDQVIVNGGIAQSGEQAMLLEPSKWLPVSPVHNGSLPPSQSQPLVAMAGIGNPQRFFDTLQALGYCVEQAQAFDDHSAYSETALNELANGRLLAMTEKDAVKCRDFAKDNWWSLAVDAKLSPSFDKQLLAKIDRLVADK.

58-65 contacts ATP; it reads TVGGSGKT.

The protein belongs to the LpxK family.

The enzyme catalyses a lipid A disaccharide + ATP = a lipid IVA + ADP + H(+). It functions in the pathway glycolipid biosynthesis; lipid IV(A) biosynthesis; lipid IV(A) from (3R)-3-hydroxytetradecanoyl-[acyl-carrier-protein] and UDP-N-acetyl-alpha-D-glucosamine: step 6/6. Its function is as follows. Transfers the gamma-phosphate of ATP to the 4'-position of a tetraacyldisaccharide 1-phosphate intermediate (termed DS-1-P) to form tetraacyldisaccharide 1,4'-bis-phosphate (lipid IVA). This Shewanella pealeana (strain ATCC 700345 / ANG-SQ1) protein is Tetraacyldisaccharide 4'-kinase.